A 473-amino-acid polypeptide reads, in one-letter code: Photosystem II CP43 reaction center protein (473 aa).

Residues 1-14 (MKTLYSLRRFYPVE) constitute a propeptide that is removed on maturation. An N-acetylthreonine modification is found at Thr-15. At Thr-15 the chain carries Phosphothreonine. The next 5 helical transmembrane spans lie at 69–93 (LFEVAHFVPEKPMYEQGLILLPHLA), 134–155 (LLGPETLEESFPFFGYVWKDRN), 178–200 (KALYFGGVYDTWAPGGGDVRKIT), 255–275 (KPFAWARRAFVWSGEAYLSYS), and 291–312 (WFNNTAYPSEFYGPTGPEASQA). [CaMn4O5] cluster is bound at residue Glu-367. The chain crosses the membrane as a helical span at residues 447-471 (RARAAAAGFEKGIDRDFEPVLSMTP).

This sequence belongs to the PsbB/PsbC family. PsbC subfamily. PSII is composed of 1 copy each of membrane proteins PsbA, PsbB, PsbC, PsbD, PsbE, PsbF, PsbH, PsbI, PsbJ, PsbK, PsbL, PsbM, PsbT, PsbX, PsbY, PsbZ, Psb30/Ycf12, at least 3 peripheral proteins of the oxygen-evolving complex and a large number of cofactors. It forms dimeric complexes. It depends on Binds multiple chlorophylls and provides some of the ligands for the Ca-4Mn-5O cluster of the oxygen-evolving complex. It may also provide a ligand for a Cl- that is required for oxygen evolution. PSII binds additional chlorophylls, carotenoids and specific lipids. as a cofactor.

It localises to the plastid. Its subcellular location is the chloroplast thylakoid membrane. In terms of biological role, one of the components of the core complex of photosystem II (PSII). It binds chlorophyll and helps catalyze the primary light-induced photochemical processes of PSII. PSII is a light-driven water:plastoquinone oxidoreductase, using light energy to abstract electrons from H(2)O, generating O(2) and a proton gradient subsequently used for ATP formation. The sequence is that of Photosystem II CP43 reaction center protein from Piper cenocladum (Ant piper).